The following is a 576-amino-acid chain: 5'-nucleotidase (576 aa).

The signal sequence occupies residues 1 to 28 (MRPAAATAPKWLLLALSALLPLWPTAKS). Residues Asp38 and His40 each coordinate Zn(2+). A disulfide bridge connects residues Cys53 and Cys59. An N-linked (GlcNAc...) asparagine glycan is attached at Asn55. Residues Asp87, Asn119, His222, and His245 each coordinate Zn(2+). Asn313, Asn335, and Asn349 each carry an N-linked (GlcNAc...) asparagine glycan. 2 disulfide bridges follow: Cys355–Cys360 and Cys367–Cys389. Position 356 (Arg356) interacts with AMP. Residue Arg356 participates in IMP binding. AMP contacts are provided by Asn392 and Arg397. Residues Asn392 and Arg397 each coordinate IMP. Residue Asn405 is glycosylated (N-linked (GlcNAc...) asparagine). Phe419 lines the AMP pocket. An IMP-binding site is contributed by Phe419. An intrachain disulfide couples Cys478 to Cys481. AMP is bound by residues Tyr502 and Asp508. Tyr502 and Asp508 together coordinate IMP. Residue Ser551 is the site of GPI-anchor amidated serine attachment. Positions 552 to 576 (AASHYQGSFPLIILSFWAVILVLYQ) are cleaved as a propeptide — removed in mature form.

The protein belongs to the 5'-nucleotidase family. Homodimer. It depends on Zn(2+) as a cofactor. In terms of tissue distribution, expressed in the brain.

The protein localises to the cell membrane. It carries out the reaction a ribonucleoside 5'-phosphate + H2O = a ribonucleoside + phosphate. The enzyme catalyses a 2'-deoxyribonucleoside 5'-phosphate + H2O = a 2'-deoxyribonucleoside + phosphate. It catalyses the reaction dTMP + H2O = thymidine + phosphate. The catalysed reaction is CMP + H2O = cytidine + phosphate. It carries out the reaction IMP + H2O = inosine + phosphate. The enzyme catalyses AMP + H2O = adenosine + phosphate. It catalyses the reaction GMP + H2O = guanosine + phosphate. The catalysed reaction is UMP + H2O = uridine + phosphate. It carries out the reaction dAMP + H2O = 2'-deoxyadenosine + phosphate. The enzyme catalyses dCMP + H2O = 2'-deoxycytidine + phosphate. Catalyzes the hydrolysis of nucleotide monophosphates, releasing inorganic phosphate and the corresponding nucleoside. AMP is the preferred substrate but can also hydrolyze CMP and GMP. Shows a preference for ribonucleotide monophosphates over their equivalent deoxyribose forms. Other substrates include IMP, UMP, dAMP, dCMP, dTMP, NAD and NMN. This chain is 5'-nucleotidase (Nt5e), found in Rattus norvegicus (Rat).